The following is a 454-amino-acid chain: Kynurenine--oxoglutarate transaminase 3 (454 aa).

Residue glycine 71 participates in substrate binding. Lysine 116 carries the N6-acetyllysine; alternate modification. Residue lysine 116 is modified to N6-succinyllysine; alternate. Residue asparagine 218 coordinates substrate. N6-(pyridoxal phosphate)lysine is present on lysine 280. Arginine 429 serves as a coordination point for substrate.

Belongs to the class-I pyridoxal-phosphate-dependent aminotransferase family. As to quaternary structure, homodimer. It depends on pyridoxal 5'-phosphate as a cofactor.

The catalysed reaction is L-kynurenine + 2-oxoglutarate = kynurenate + L-glutamate + H2O. The enzyme catalyses L-kynurenine + glyoxylate = kynurenate + glycine + H2O. It carries out the reaction 3-hydroxy-L-kynurenine + glyoxylate = xanthurenate + glycine + H2O. It catalyses the reaction an S-substituted L-cysteine + H2O = a thiol + pyruvate + NH4(+). The protein operates within amino-acid degradation; L-kynurenine degradation; kynurenate from L-kynurenine: step 1/2. Its function is as follows. Catalyzes the irreversible transamination of the L-tryptophan metabolite L-kynurenine to form kynurenic acid (KA), an intermediate in the tryptophan catabolic pathway which is also a broad spectrum antagonist of the three ionotropic excitatory amino acid receptors among others. May catalyze the beta-elimination of S-conjugates and Se-conjugates of L-(seleno)cysteine, resulting in the cleavage of the C-S or C-Se bond. Has transaminase activity towards L-kynurenine, tryptophan, phenylalanine, serine, cysteine, methionine, histidine, glutamine and asparagine with glyoxylate as an amino group acceptor (in vitro). Has lower activity with 2-oxoglutarate as amino group acceptor (in vitro). The chain is Kynurenine--oxoglutarate transaminase 3 from Rattus norvegicus (Rat).